The chain runs to 114 residues: Beta-microseminoprotein J1 (114 aa).

Residues 1-20 (MNVLLGGLVIFATFVTLCNA) form the signal peptide. 5 disulfides stabilise this stretch: Cys22-Cys70, Cys38-Cys62, Cys57-Cys93, Cys60-Cys69, and Cys84-Cys107.

This sequence belongs to the beta-microseminoprotein family.

It is found in the secreted. The chain is Beta-microseminoprotein J1 (MSPJ) from Saguinus oedipus (Cotton-top tamarin).